A 417-amino-acid polypeptide reads, in one-letter code: Serine/threonine transporter SstT (417 aa).

8 helical membrane passes run 21-41 (ILAGLIAGILLAWLAPEVAKM), 49-69 (FISALKAVAPVLVWVLVMASI), 83-103 (ILVLYLLATFFAALTAVVASF), 142-162 (ALINGNYMGILAWAIGLGLAL), 193-213 (IGIFGLVSSTIATTGFKALAG), 218-238 (LLVLIGCMLFVALVVNPLIVF), 291-311 (IPLGATINMGGAAITITILTL), and 331-351 (LVAAICACGASGVAGGSLLLI).

This sequence belongs to the dicarboxylate/amino acid:cation symporter (DAACS) (TC 2.A.23) family.

The protein resides in the cell inner membrane. The enzyme catalyses L-serine(in) + Na(+)(in) = L-serine(out) + Na(+)(out). It catalyses the reaction L-threonine(in) + Na(+)(in) = L-threonine(out) + Na(+)(out). Functionally, involved in the import of serine and threonine into the cell, with the concomitant import of sodium (symport system). The sequence is that of Serine/threonine transporter SstT from Proteus mirabilis (strain HI4320).